We begin with the raw amino-acid sequence, 293 residues long: MTNQQDYTQDNDKLYRYLFQHRAVRGEWVRLNKTFTDTLNTHQYPKAVQDLLGEMMVATNLLTATLKFAGNITVQIQGDGPLRLALVNGNDQQQIRALARVDGNITENMSLHNMIGKGVLVITIAPKEGERYQGVISLDKPTITECLEDYFVRSEQLQTQLIIRTGEYEGKPVAAGMLLQIMPDGSGTPEDFEHLTTLAATVKDEELFGLPAEELLYRLYHEETVNLYPAQDVQFFCGCSAERSSSALLLISDEEIDEILAEHKGRIDMQCECCGTHYFFNKEAIEKLKSTRV.

2 cysteine pairs are disulfide-bonded: cysteine 237/cysteine 239 and cysteine 271/cysteine 274.

The protein belongs to the HSP33 family. Under oxidizing conditions two disulfide bonds are formed involving the reactive cysteines. Under reducing conditions zinc is bound to the reactive cysteines and the protein is inactive.

It is found in the cytoplasm. Its function is as follows. Redox regulated molecular chaperone. Protects both thermally unfolding and oxidatively damaged proteins from irreversible aggregation. Plays an important role in the bacterial defense system toward oxidative stress. The sequence is that of 33 kDa chaperonin from Haemophilus influenzae (strain ATCC 51907 / DSM 11121 / KW20 / Rd).